The chain runs to 393 residues: NADH-quinone oxidoreductase subunit D (393 aa).

This sequence belongs to the complex I 49 kDa subunit family. In terms of assembly, NDH-1 is composed of 14 different subunits. Subunits NuoB, C, D, E, F, and G constitute the peripheral sector of the complex.

It localises to the cell inner membrane. It catalyses the reaction a quinone + NADH + 5 H(+)(in) = a quinol + NAD(+) + 4 H(+)(out). Its function is as follows. NDH-1 shuttles electrons from NADH, via FMN and iron-sulfur (Fe-S) centers, to quinones in the respiratory chain. The immediate electron acceptor for the enzyme in this species is believed to be ubiquinone. Couples the redox reaction to proton translocation (for every two electrons transferred, four hydrogen ions are translocated across the cytoplasmic membrane), and thus conserves the redox energy in a proton gradient. This chain is NADH-quinone oxidoreductase subunit D, found in Ehrlichia canis (strain Jake).